The sequence spans 575 residues: Muellerian-inhibiting factor (575 aa).

Residues 1–24 (MPGPSLSLALVLSAMGALLRPGTP) form the signal peptide. Residues 25–466 (REEVFSTSAL…ERSGSARAQR (442 aa)) constitute a propeptide that is removed on maturation. N-linked (GlcNAc...) asparagine glycans are attached at residues Asn78 and Asn344. Intrachain disulfides connect Cys477–Cys541, Cys503–Cys572, and Cys507–Cys574.

This sequence belongs to the TGF-beta family. Homodimer; disulfide-linked. Preproprotein is proteolytically processed to generate N- and C-terminal cleavage products that homodimerize and associate to form a biologically active non-covalent complex. Binding of the non-covalent complex to AMHR2 induces dissociation of the pro-region from the mature C-terminal dimer. The N-terminal portion of the protein, despite having no intrinsic activity, has the role of amplifying the activity of the C-terminus. Expressed in fetal testis and adult ovaries.

Its subcellular location is the secreted. Plays an important role in several reproductive functions. Induces Muellerian duct regression during male fetal sexual differentiation and plays a role in Leydig cell differentiation and function. In female acts as a negative regulator of the primordial to primary follicle transition and decreases FSH sensitivity of growing follicles. AMH signals by binding to a specific type-II receptor, AMHR2, that heterodimerizes with type-I receptors (ACVR1 and BMPR1A), and recruiting SMAD proteins that are translocated to the nucleus to regulate target gene expression. The polypeptide is Muellerian-inhibiting factor (AMH) (Bos taurus (Bovine)).